The sequence spans 859 residues: Leucine--tRNA ligase (859 aa).

Positions 42–52 (PYPSGRLHMGH) match the 'HIGH' region motif. The 'KMSKS' region motif lies at 618 to 622 (KMSKS). K621 lines the ATP pocket.

It belongs to the class-I aminoacyl-tRNA synthetase family.

The protein localises to the cytoplasm. It carries out the reaction tRNA(Leu) + L-leucine + ATP = L-leucyl-tRNA(Leu) + AMP + diphosphate. In Shewanella oneidensis (strain ATCC 700550 / JCM 31522 / CIP 106686 / LMG 19005 / NCIMB 14063 / MR-1), this protein is Leucine--tRNA ligase.